The sequence spans 188 residues: Apolipophorin-3 (188 aa).

A signal peptide spans 1–17; sequence MVAKLFVLVACIALSHA. Residues 18–22 constitute a propeptide that is removed on maturation; sequence AMVRR.

This sequence belongs to the insect apolipophorin-3 family. As to quaternary structure, equilibrium between a soluble monomer and a bound lipoprotein form. Apolipophorin-3 associates with lipophorin during lipid loading until each particle contains 9 or 14 molecules of apolipophorin-3. Expressed in fat body and secreted in hemolymph. Also expressed in ovary and testis at lower levels.

It is found in the secreted. In terms of biological role, assists in the loading of diacylglycerol, generated from triacylglycerol stores in the fat body through the action of adipokinetic hormone, into lipophorin, the hemolymph lipoprotein. It increases the lipid carrying capacity of lipophorin by covering the expanding hydrophobic surface resulting from diacylglycerol uptake. It thus plays a critical role in the transport of lipids during flight in several species of insects. The chain is Apolipophorin-3 from Spodoptera litura (Asian cotton leafworm).